We begin with the raw amino-acid sequence, 189 residues long: Dual specificity phosphatase 21 (189 aa).

Residues glycine 20–serine 161 form the Tyrosine-protein phosphatase domain. Residues serine 43–leucine 128 form a sufficient for mitochondrial localization region. The active-site Phosphocysteine intermediate is cysteine 105.

The protein belongs to the protein-tyrosine phosphatase family. Non-receptor class dual specificity subfamily. Microtubule inner protein component of sperm flagellar doublet microtubules. As to expression, selectively expressed in testis.

The protein localises to the cytoplasm. The protein resides in the nucleus. It localises to the mitochondrion inner membrane. Its subcellular location is the cytoskeleton. It is found in the flagellum axoneme. It catalyses the reaction O-phospho-L-tyrosyl-[protein] + H2O = L-tyrosyl-[protein] + phosphate. The enzyme catalyses O-phospho-L-seryl-[protein] + H2O = L-seryl-[protein] + phosphate. It carries out the reaction O-phospho-L-threonyl-[protein] + H2O = L-threonyl-[protein] + phosphate. Its function is as follows. Protein phosphatase component of the sperm flagellar doublet microtubules. May act as a regulator of sperm motility by mediating dephosphorylation of sperm doublet microtubule proteins. Can dephosphorylate single and diphosphorylated synthetic MAPK peptides, with preference for the phosphotyrosine and diphosphorylated forms over phosphothreonine. This chain is Dual specificity phosphatase 21, found in Mus musculus (Mouse).